We begin with the raw amino-acid sequence, 1058 residues long: MAKRTDIKKIMVIGSGPIVIGQAAEFDYAGTQACLALKEEGYQVVLVNSNPATIMTDKEVADKVYIEPLTLAFVSRILRKERPDALLPTLGGQTGLNLAMELSKAGILQELGVELLGTPLSAIDQAEDRDLFKQLMKELGEPIPESEIVTTVEGAISFANAIGYPVIVRPAFTLGGTGGGICTNEEALRDIVENGLKLSPVTQCLIERSIAGFKEIEYEVMRDAADNALVVCSMENFDPVGIHTGDSIVFAPTQTLSDVENQLLRDASLRIIRALKIEGGCNVQLALDPNSFSYYVIEVNPRVSRSSALASKATGYPIAKIAAKIAVGLRLDDMLNPVTGTTYAMFEPALDYVVAKLPRFPFDKFEQGERRLGTQMKATGEVMAIGRRIEECLLKACRSLEIGVDHNELKGLDTVSDHELVAHIVRAQDDRLFYLSEALRRGYSIEELAGLTKIDLFFLDKLRHIVELEQELVKKPVDIDLLTEAKRYGFSDQKIAELWQTDAASIRRLRRAYRVLPVYKMVDTCAAEFDSQTPYFYSTYEWENESIKSEKESVIVLGSGPIRIGQGVEFDYATVHSVKAIQAAGYEAIIMNSNPETVSTDFSISDKLYFEPLTFEEVMNVIELEQPKGVILQFGGQTAINLAEQLTKAGVPILGTQLEDLDRAEDRKLFEKALKDLGIPQPPGKTATNEAEALEAARAIGFPVLVRPSYVLGGRAMEIVENEDDLRSYMKTAVKASPEHPVLIDSYILGKECEVDAISDGQSVLIPGIMEHIERAGVHSGDSMAVYPPQHLSKQVQDKIVDYTKRLAIGLNCIGMMNIQFVIQNEQVYVIEVNPRASRTVPFLSKVTNIPMAQVATKLILDQTLKDLGYQDGLYPESSLVHIKAPVFSFAKLAKVDSLLGPEMKSTGEVMGSDLTLEKALYKAFEASYLHMPEYGTIVFTIADDHKPEALALARRFSAIGYQVMATEGTAAFFADQGLDSQLVGKIGGNAHDIPALLRKGQIQAIINTVGAKRVADQDGQVIRSSAIEQGVPLFTALDTAAAMLRVLESRTFSIEAI.

The carboxyphosphate synthetic domain stretch occupies residues 1–401 (MAKRTDIKKI…CLLKACRSLE (401 aa)). Positions 129, 169, 175, 176, 208, 210, 215, 241, 242, 243, 284, and 298 each coordinate ATP. Residues 133–327 (KQLMKELGEP…IAKIAAKIAV (195 aa)) form the ATP-grasp 1 domain. Residues Gln-284, Glu-298, and Asn-300 each contribute to the Mg(2+) site. Mn(2+)-binding residues include Gln-284, Glu-298, and Asn-300. An oligomerization domain region spans residues 402–546 (IGVDHNELKG…YSTYEWENES (145 aa)). The segment at 547–929 (IKSEKESVIV…ALYKAFEASY (383 aa)) is carbamoyl phosphate synthetic domain. One can recognise an ATP-grasp 2 domain in the interval 671–861 (EKALKDLGIP…MAQVATKLIL (191 aa)). ATP is bound by residues Arg-707, Ser-746, Ile-748, Glu-752, Gly-777, Val-778, His-779, Ser-780, Gln-820, and Glu-832. Residues Gln-820, Glu-832, and Asn-834 each contribute to the Mg(2+) site. Residues Gln-820, Glu-832, and Asn-834 each coordinate Mn(2+). The region spanning 930 to 1058 (LHMPEYGTIV…ESRTFSIEAI (129 aa)) is the MGS-like domain. Positions 930 to 1058 (LHMPEYGTIV…ESRTFSIEAI (129 aa)) are allosteric domain.

Belongs to the CarB family. In terms of assembly, composed of two chains; the small (or glutamine) chain promotes the hydrolysis of glutamine to ammonia, which is used by the large (or ammonia) chain to synthesize carbamoyl phosphate. Tetramer of heterodimers (alpha,beta)4. Mg(2+) serves as cofactor. Requires Mn(2+) as cofactor.

It catalyses the reaction hydrogencarbonate + L-glutamine + 2 ATP + H2O = carbamoyl phosphate + L-glutamate + 2 ADP + phosphate + 2 H(+). The catalysed reaction is hydrogencarbonate + NH4(+) + 2 ATP = carbamoyl phosphate + 2 ADP + phosphate + 2 H(+). It participates in amino-acid biosynthesis; L-arginine biosynthesis; carbamoyl phosphate from bicarbonate: step 1/1. Its pathway is pyrimidine metabolism; UMP biosynthesis via de novo pathway; (S)-dihydroorotate from bicarbonate: step 1/3. Its function is as follows. Large subunit of the glutamine-dependent carbamoyl phosphate synthetase (CPSase). CPSase catalyzes the formation of carbamoyl phosphate from the ammonia moiety of glutamine, carbonate, and phosphate donated by ATP, constituting the first step of 2 biosynthetic pathways, one leading to arginine and/or urea and the other to pyrimidine nucleotides. The large subunit (synthetase) binds the substrates ammonia (free or transferred from glutamine from the small subunit), hydrogencarbonate and ATP and carries out an ATP-coupled ligase reaction, activating hydrogencarbonate by forming carboxy phosphate which reacts with ammonia to form carbamoyl phosphate. The sequence is that of Carbamoyl phosphate synthase large chain from Streptococcus equi subsp. zooepidemicus (strain H70).